The primary structure comprises 90 residues: U7-theraphotoxin-Hhn1i (90 aa).

The signal sequence occupies residues 1 to 19; that stretch reads MKTAIFTVVLALAVFAVLS. A propeptide spanning residues 20–50 is cleaved from the precursor; it reads FGWEANEKALSEEFTELIHEKEAASETEARE. Intrachain disulfides connect cysteine 51–cysteine 65, cysteine 58–cysteine 70, and cysteine 64–cysteine 81.

It belongs to the neurotoxin 10 (Hwtx-1) family. 13 (Hntx-13) subfamily. As to expression, expressed by the venom gland.

The protein localises to the secreted. Functionally, ion channel inhibitor. This Cyriopagopus hainanus (Chinese bird spider) protein is U7-theraphotoxin-Hhn1i.